A 345-amino-acid chain; its full sequence is Phosphoribosylformylglycinamidine cyclo-ligase (345 aa).

The protein belongs to the AIR synthase family.

The protein resides in the cytoplasm. It catalyses the reaction 2-formamido-N(1)-(5-O-phospho-beta-D-ribosyl)acetamidine + ATP = 5-amino-1-(5-phospho-beta-D-ribosyl)imidazole + ADP + phosphate + H(+). The protein operates within purine metabolism; IMP biosynthesis via de novo pathway; 5-amino-1-(5-phospho-D-ribosyl)imidazole from N(2)-formyl-N(1)-(5-phospho-D-ribosyl)glycinamide: step 2/2. The sequence is that of Phosphoribosylformylglycinamidine cyclo-ligase from Escherichia coli (strain 55989 / EAEC).